A 176-amino-acid polypeptide reads, in one-letter code: Large ribosomal subunit protein uL6 (176 aa).

The protein belongs to the universal ribosomal protein uL6 family. Part of the 50S ribosomal subunit.

Its function is as follows. This protein binds to the 23S rRNA, and is important in its secondary structure. It is located near the subunit interface in the base of the L7/L12 stalk, and near the tRNA binding site of the peptidyltransferase center. The protein is Large ribosomal subunit protein uL6 of Lactobacillus delbrueckii subsp. bulgaricus (strain ATCC 11842 / DSM 20081 / BCRC 10696 / JCM 1002 / NBRC 13953 / NCIMB 11778 / NCTC 12712 / WDCM 00102 / Lb 14).